Reading from the N-terminus, the 355-residue chain is Isopentenyl-diphosphate delta-isomerase (355 aa).

Substrate is bound at residue 12 to 13 (RK). FMN contacts are provided by residues S70, 71–73 (SMT), S101, and N130. 101 to 103 (SMR) contacts substrate. Q165 lines the substrate pocket. E166 serves as a coordination point for Mg(2+). FMN is bound by residues K197 and 308–309 (AG).

This sequence belongs to the IPP isomerase type 2 family. Homooctamer. Dimer of tetramers. FMN serves as cofactor. Requires NADPH as cofactor. The cofactor is Mg(2+).

Its subcellular location is the cytoplasm. It catalyses the reaction isopentenyl diphosphate = dimethylallyl diphosphate. Functionally, involved in the biosynthesis of isoprenoids. Catalyzes the 1,3-allylic rearrangement of the homoallylic substrate isopentenyl (IPP) to its allylic isomer, dimethylallyl diphosphate (DMAPP). The sequence is that of Isopentenyl-diphosphate delta-isomerase from Chlorobium phaeovibrioides (strain DSM 265 / 1930) (Prosthecochloris vibrioformis (strain DSM 265)).